Here is a 258-residue protein sequence, read N- to C-terminus: Imidazole glycerol phosphate synthase subunit HisF (258 aa).

Residues Asp-12 and Asp-131 contribute to the active site.

This sequence belongs to the HisA/HisF family. As to quaternary structure, heterodimer of HisH and HisF.

It localises to the cytoplasm. It catalyses the reaction 5-[(5-phospho-1-deoxy-D-ribulos-1-ylimino)methylamino]-1-(5-phospho-beta-D-ribosyl)imidazole-4-carboxamide + L-glutamine = D-erythro-1-(imidazol-4-yl)glycerol 3-phosphate + 5-amino-1-(5-phospho-beta-D-ribosyl)imidazole-4-carboxamide + L-glutamate + H(+). The protein operates within amino-acid biosynthesis; L-histidine biosynthesis; L-histidine from 5-phospho-alpha-D-ribose 1-diphosphate: step 5/9. Functionally, IGPS catalyzes the conversion of PRFAR and glutamine to IGP, AICAR and glutamate. The HisF subunit catalyzes the cyclization activity that produces IGP and AICAR from PRFAR using the ammonia provided by the HisH subunit. This is Imidazole glycerol phosphate synthase subunit HisF from Nitrosomonas europaea (strain ATCC 19718 / CIP 103999 / KCTC 2705 / NBRC 14298).